Here is a 239-residue protein sequence, read N- to C-terminus: Heptaprenylglyceryl phosphate synthase (239 aa).

Position 12 (Lys12) interacts with sn-glycerol 1-phosphate. The Mg(2+) site is built by Asp14 and Thr40. Residues 159–164, Gly189, and 209–210 contribute to the sn-glycerol 1-phosphate site; these read YLEYSG and GN.

The protein belongs to the GGGP/HepGP synthase family. Group I subfamily. In terms of assembly, homodimer. It depends on Mg(2+) as a cofactor.

It carries out the reaction sn-glycerol 1-phosphate + all-trans-heptaprenyl diphosphate = 3-heptaprenyl-sn-glycero-1-phosphate + diphosphate. Its pathway is membrane lipid metabolism; glycerophospholipid metabolism. In terms of biological role, prenyltransferase that catalyzes in vivo the transfer of the heptaprenyl moiety of heptaprenyl pyrophosphate (HepPP; 35 carbon atoms) to the C3 hydroxyl of sn-glycerol-1-phosphate (G1P), producing heptaprenylglyceryl phosphate (HepGP). This reaction is an ether-bond-formation step in the biosynthesis of archaea-type G1P-based membrane lipids found in Bacillales. The chain is Heptaprenylglyceryl phosphate synthase from Geobacillus thermodenitrificans (strain NG80-2).